The sequence spans 201 residues: Ubiquitin-conjugating enzyme E2 E2 (201 aa).

Positions 1–10 are enriched in basic and acidic residues; that stretch reads MSTEAQRVDD. Residues 1-55 are disordered; the sequence is MSTEAQRVDDSPSTSGGSSDGDQRESVQQEPEREQVQPKKKEGKISSKTAAKLST. An N-acetylserine modification is found at Ser-2. Residues Ser-11, Ser-15, Ser-18, and Ser-19 each carry the phosphoserine modification. Positions 21-45 are enriched in basic and acidic residues; that stretch reads GDQRESVQQEPEREQVQPKKKEGKI. Residues 46–55 are compositionally biased toward low complexity; sequence SSKTAAKLST. Positions 55 to 201 constitute a UBC core domain; sequence TSAKRIQKEL…ARQWTKRYAT (147 aa). Cys-139 acts as the Glycyl thioester intermediate in catalysis.

The protein belongs to the ubiquitin-conjugating enzyme family. Autoubiquitinated in vitro.

It catalyses the reaction S-ubiquitinyl-[E1 ubiquitin-activating enzyme]-L-cysteine + [E2 ubiquitin-conjugating enzyme]-L-cysteine = [E1 ubiquitin-activating enzyme]-L-cysteine + S-ubiquitinyl-[E2 ubiquitin-conjugating enzyme]-L-cysteine.. It participates in protein modification; protein ubiquitination. Functionally, accepts ubiquitin from the E1 complex and catalyzes its covalent attachment to other proteins. In vitro catalyzes 'Lys-11'- and 'Lys-48'-, as well as 'Lys-63'-linked polyubiquitination. Catalyzes the ISGylation of influenza A virus NS1 protein. The chain is Ubiquitin-conjugating enzyme E2 E2 from Homo sapiens (Human).